Reading from the N-terminus, the 425-residue chain is Alpha-(1,3)-fucosyltransferase C (425 aa).

The Cytoplasmic segment spans residues 1-37 (MYLGRVHCSFEVPGLLSGRVGHMSMAVRSVRLACGPR). A helical; Signal-anchor for type II membrane protein membrane pass occupies residues 38–58 (GALLLLLLVLLGVLVVLHKVT). Over 59 to 425 (QSPLLNQNKI…SCRLQSRIRL (367 aa)) the chain is Lumenal. N-linked (GlcNAc...) asparagine glycosylation is found at Asn-187 and Asn-230.

The protein belongs to the glycosyltransferase 10 family.

The protein resides in the golgi apparatus. Its subcellular location is the golgi stack membrane. It functions in the pathway protein modification; protein glycosylation. The polypeptide is Alpha-(1,3)-fucosyltransferase C (FucTC) (Drosophila melanogaster (Fruit fly)).